The sequence spans 369 residues: MNTFGQQPTNPHAQDLLDMAMYCDHFSLYHQQQNQQLPQRPAAPPATGYGLNEYSSPPSSPYLWLNGPAINSSPYLNGGSGSPYFPAGYGGGQRQFLPPSSGFGVADFPWLSIPNQADLLKMVRPPYSYSSLIAMAIQNTPDKKLTLSQIYNYVAENFPFYKKSKAGWQNSIRHNLSLNDCFKKVARDDHDPGKGNYWTLDPNCEKMFDNGNFRRKRKRKSESVGAGFDEDSNEDKKPLALKSLGSDSPQGASVLEQSSYDAAPEGKSKAPVGSAAQDSSHCFTNFASNMNALINNRTPRQFTAGRGDFSNSRHYLAELTSCPIPSPQISAPQTGSKVPCYPSKQQNNLCTSVMNPFGLNHLYSREGEV.

A DNA-binding region (fork-head) is located at residues R124 to K218. The disordered stretch occupies residues R215–A252.

As to expression, localized to the animal hemisphere of early cleavage stage embryos. Zygotic expression is restricted to the dorsal part of the epibranchial placodes of the head within a region located near the tip of the first, second and third visceral pouch.

Its subcellular location is the nucleus. Functionally, possible transcriptional activator. The protein is Forkhead box protein I2-A (foxi2-a) of Xenopus laevis (African clawed frog).